The following is a 140-amino-acid chain: uncharacterized protein (140 aa).

Residues 27–65 (LLGEVSELELQKICFNRSLRNEINQLEEQNDISFVRVER) are a coiled coil.

This is an uncharacterized protein from Pasteurella multocida (strain Pm70).